The following is a 381-amino-acid chain: cAMP-dependent protein kinase type I-beta regulatory subunit (381 aa).

A dimerization and phosphorylation region spans residues 2–136 (ASPPACPSEE…ALAKAISKNV (135 aa)). The residue at position 3 (serine 3) is a Phosphoserine. Tyrosine 21 is modified (3'-nitrotyrosine). The interval 67–98 (ARQKSNSQSDSHDEEVSPTPPNPVVKARRRRG) is disordered. Phosphoserine is present on residues serine 77 and serine 83. The residue at position 85 (threonine 85) is a Phosphothreonine. The Pseudophosphorylation motif motif lies at 96 to 100 (RRGGV). An Omega-N-methylarginine modification is found at arginine 97. Residues 137 to 254 (LFAH…SKVS), glutamate 202, arginine 211, 255 to 381 (ILES…SLTV), glutamate 326, and arginine 335 contribute to the 3',5'-cyclic AMP site.

The protein belongs to the cAMP-dependent kinase regulatory chain family. In terms of assembly, the inactive holoenzyme is composed of two regulatory chains and two catalytic chains. Activation by cAMP releases the two active catalytic monomers and the regulatory dimer. Interacts with PRKX; regulates this cAMP-dependent protein kinase. Interacts with C2orf88/smAKAP; this interaction may target PRKAR1B to the plasma membrane. The pseudophosphorylation site binds to the substrate-binding region of the catalytic chain, resulting in the inhibition of its activity. Four types of regulatory chains are found: I-alpha, I-beta, II-alpha, and II-beta. Their expression varies among tissues and is in some cases constitutive and in others inducible.

Its subcellular location is the cell membrane. Regulatory subunit of the cAMP-dependent protein kinases involved in cAMP signaling in cells. The chain is cAMP-dependent protein kinase type I-beta regulatory subunit (PRKAR1B) from Homo sapiens (Human).